The primary structure comprises 905 residues: Core protein VP3 (905 aa).

Belongs to the orbivirus VP3 family.

Its subcellular location is the virion. In terms of biological role, the VP3 protein is one of the five proteins (with VP1, VP4, VP6 and VP7) which form the inner capsid of the virus. The protein is Core protein VP3 (Segment-3) of African horse sickness virus 6 (AHSV-6).